The primary structure comprises 97 residues: UPF0235 protein Daro_3887 (97 aa).

It belongs to the UPF0235 family.

This is UPF0235 protein Daro_3887 from Dechloromonas aromatica (strain RCB).